Here is a 109-residue protein sequence, read N- to C-terminus: Small ribosomal subunit protein bS20 (109 aa).

The disordered stretch occupies residues 1–26; that stretch reads MANIKSAKKRAIQSEKRRKHNASRRS.

The protein belongs to the bacterial ribosomal protein bS20 family.

Binds directly to 16S ribosomal RNA. The polypeptide is Small ribosomal subunit protein bS20 (Hamiltonella defensa subsp. Acyrthosiphon pisum (strain 5AT)).